Reading from the N-terminus, the 586-residue chain is Ezrin (586 aa).

The FERM domain maps to 2-295; that stretch reads PKPINVRVTT…GNHELYMRRR (294 aa). An N6-acetyllysine modification is found at Lys60. The [IL]-x-C-x-x-[DE] motif signature appears at 115-120; that stretch reads IYCPPE. Position 146 is a phosphotyrosine; by PDGFR (Tyr146). The segment at 244-586 is interaction with SCYL3; sequence EIRNISFNDK…KQRIDEFEAM (343 aa). Residues 302–462 adopt a coiled-coil conformation; that stretch reads VQQMKAQARE…QDDLVKTKEE (161 aa). The segment at 306–338 is disordered; sequence KAQAREEKHQKQLERQQLETEKKRRETVEREKE. Residues 308-338 show a composition bias toward basic and acidic residues; it reads QAREEKHQKQLERQQLETEKKRRETVEREKE. Residue Tyr354 is modified to Phosphotyrosine; by PDGFR. Ser366 bears the Phosphoserine mark. Residue Tyr478 is modified to Phosphotyrosine. Residues 534 to 565 are disordered; it reads LSNELSQARDENKRTHNDIIHNENMRQGRDKY. At Ser535 the chain carries Phosphoserine. Over residues 540–565 the composition is skewed to basic and acidic residues; sequence QARDENKRTHNDIIHNENMRQGRDKY. At Thr567 the chain carries Phosphothreonine; by ROCK2 and PKC/PRKCI.

As to quaternary structure, interacts with PALS1 and NHERF2. Found in a complex with EZR, PODXL and NHERF2. Interacts with MCC, PLEKHG6, PODXL, SCYL3/PACE1, NHERF1 and TMEM8B. Interacts (when phosphorylated) with FES/FPS. Interacts with dimeric S100P, the interaction may be activating through unmasking of F-actin binding sites. Identified in complexes that contain VIM, EZR, AHNAK, BFSP1, BFSP2, ANK2, PLEC, PRX and spectrin. Detected in a complex composed of at least EZR, AHNAK, PPL and PRX. Interacts with PDPN (via cytoplasmic domain); activates RHOA and promotes epithelial-mesenchymal transition. Interacts with SPN/CD43 cytoplasmic tail. Interacts with CD44 and ICAM2. Interacts with SLC9A3; interaction targets SLC9A3 to the apical membrane. Interacts with SLC9A1; regulates interactions of SLC9A1 with cytoskeletal and promotes stress fiber formation. Interacts with CLIC5; may work together in a complex which also includes RDX and MYO6 to stabilize linkages between the plasma membrane and subjacent actin cytoskeleton at the base of stereocilia. In terms of processing, phosphorylated by tyrosine-protein kinases. Phosphorylation by ROCK2 suppresses the head-to-tail association of the N-terminal and C-terminal halves resulting in an opened conformation which is capable of actin and membrane-binding. Post-translationally, S-nitrosylation is induced by interferon-gamma and oxidatively-modified low-densitity lipoprotein (LDL(ox)) possibly implicating the iNOS-S100A8/9 transnitrosylase complex. In terms of tissue distribution, detected in eye lens fiber cells. Expressed in cerebrum and cerebellum (at protein level). Component of the microvilli of intestinal epithelial cells.

Its subcellular location is the apical cell membrane. It is found in the cell projection. The protein resides in the microvillus membrane. It localises to the ruffle membrane. The protein localises to the cytoplasm. Its subcellular location is the cell cortex. It is found in the cytoskeleton. The protein resides in the microvillus. With respect to regulation, a head-to-tail association, of the N-terminal and C-terminal halves results in a closed conformation (inactive form) which is incapable of actin or membrane-binding. In terms of biological role, probably involved in connections of major cytoskeletal structures to the plasma membrane. In epithelial cells, required for the formation of microvilli and membrane ruffles on the apical pole. Along with PLEKHG6, required for normal macropinocytosis. The sequence is that of Ezrin (Ezr) from Mus musculus (Mouse).